The sequence spans 200 residues: GTP cyclohydrolase-2 (200 aa).

50–54 (RVHSE) serves as a coordination point for GTP. Zn(2+)-binding residues include Cys-55, Cys-66, and Cys-68. Residues Gln-71, 93 to 95 (EGR), and Thr-115 contribute to the GTP site. Catalysis depends on Asp-127, which acts as the Proton acceptor. The active-site Nucleophile is Arg-129. The GTP site is built by Thr-150 and Lys-155.

Belongs to the GTP cyclohydrolase II family. It depends on Zn(2+) as a cofactor.

It carries out the reaction GTP + 4 H2O = 2,5-diamino-6-hydroxy-4-(5-phosphoribosylamino)-pyrimidine + formate + 2 phosphate + 3 H(+). Its pathway is cofactor biosynthesis; riboflavin biosynthesis; 5-amino-6-(D-ribitylamino)uracil from GTP: step 1/4. Its function is as follows. Catalyzes the conversion of GTP to 2,5-diamino-6-ribosylamino-4(3H)-pyrimidinone 5'-phosphate (DARP), formate and pyrophosphate. This Acinetobacter baumannii (strain AB0057) protein is GTP cyclohydrolase-2.